Reading from the N-terminus, the 121-residue chain is Phospholipase A2 homolog EPL_00195 (121 aa).

7 disulfide bridges follow: Cys25-Cys114, Cys27-Cys43, Cys42-Cys94, Cys48-Cys121, Cys49-Cys87, Cys56-Cys80, and Cys74-Cys85. Positions 104 to 116 (KKYRIYPNFLCRG) are important for membrane-damaging activities in eukaryotes and bacteria; heparin-binding.

Belongs to the phospholipase A2 family. Group II subfamily. S49 sub-subfamily. Monomer. Expressed by the venom gland.

The protein localises to the secreted. Snake venom phospholipase A2 homolog that lacks enzymatic activity. Shows high myotoxin activities and displays edema-inducing activities. Has cytotoxic activities against HUVEC cells (LC(50)=2.5 uL) and human lung adenocarcinoma A549 cells (LC(50)=2.9 uL). The chain is Phospholipase A2 homolog EPL_00195 from Echis pyramidum leakeyi (Leakey's carpet viper).